A 1081-amino-acid polypeptide reads, in one-letter code: Probable sucrose-phosphate synthase 2 (1081 aa).

3 disordered regions span residues 116–152 (EQGRKDVTEDMSEDLSEGEKGDVMGETPVALDSPRGN), 239–267 (EPTEMLSSSSTTAGEAHEPEEEEEEEDLG), and 760–780 (IKRQDSGPAQREAEGKAGDVP). Acidic residues predominate over residues 256–267 (EPEEEEEEEDLG).

This sequence belongs to the glycosyltransferase 1 family. As to quaternary structure, homodimer or homotetramer.

It catalyses the reaction beta-D-fructose 6-phosphate + UDP-alpha-D-glucose = sucrose 6(F)-phosphate + UDP + H(+). It participates in glycan biosynthesis; sucrose biosynthesis; sucrose from D-fructose 6-phosphate and UDP-alpha-D-glucose: step 1/2. With respect to regulation, activity is regulated by phosphorylation and moderated by concentration of metabolites and light. Functionally, plays a role in photosynthetic sucrose synthesis by catalyzing the rate-limiting step of sucrose biosynthesis from UDP-glucose and fructose- 6-phosphate. Involved in the regulation of carbon partitioning in the leaves of plants. May regulate the synthesis of sucrose and therefore play a major role as a limiting factor in the export of photoassimilates out of the leaf. Plays a role for sucrose availability that is essential for plant growth and fiber elongation. This Craterostigma plantagineum (Blue gem) protein is Probable sucrose-phosphate synthase 2 (SPS2).